The chain runs to 280 residues: Orotidine 5'-phosphate decarboxylase (280 aa).

Substrate is bound by residues D40, 62-64 (KTH), 93-102 (DRKFVDIGNT), Y228, and R246. K95 serves as the catalytic Proton donor.

The protein belongs to the OMP decarboxylase family.

It catalyses the reaction orotidine 5'-phosphate + H(+) = UMP + CO2. It functions in the pathway pyrimidine metabolism; UMP biosynthesis via de novo pathway; UMP from orotate: step 2/2. The polypeptide is Orotidine 5'-phosphate decarboxylase (PYRG) (Solorina crocea).